The following is a 170-amino-acid chain: Translationally-controlled tumor protein homolog (170 aa).

Residues 1-170 enclose the TCTP domain; sequence MIIYKCIISG…FKDGLLAEKC (170 aa).

The protein belongs to the TCTP family.

It is found in the cytoplasm. Involved in calcium binding and microtubule stabilization. This Lateolabrax japonicus (Japanese sea perch) protein is Translationally-controlled tumor protein homolog (tpt1).